Consider the following 332-residue polypeptide: Ketol-acid reductoisomerase (NADP(+)) (332 aa).

One can recognise a KARI N-terminal Rossmann domain in the interval Met-1–Thr-182. Residues Tyr-25–Gln-28, Arg-48, Ser-53, and Asp-83–Gln-86 each bind NADP(+). Residue His-108 is part of the active site. Gly-134 is an NADP(+) binding site. Residues Thr-183 to Leu-328 form the KARI C-terminal knotted domain. Mg(2+)-binding residues include Asp-191, Glu-195, Glu-227, and Glu-231. Position 252 (Ser-252) interacts with substrate.

Belongs to the ketol-acid reductoisomerase family. The cofactor is Mg(2+).

The enzyme catalyses (2R)-2,3-dihydroxy-3-methylbutanoate + NADP(+) = (2S)-2-acetolactate + NADPH + H(+). It carries out the reaction (2R,3R)-2,3-dihydroxy-3-methylpentanoate + NADP(+) = (S)-2-ethyl-2-hydroxy-3-oxobutanoate + NADPH + H(+). The protein operates within amino-acid biosynthesis; L-isoleucine biosynthesis; L-isoleucine from 2-oxobutanoate: step 2/4. Its pathway is amino-acid biosynthesis; L-valine biosynthesis; L-valine from pyruvate: step 2/4. Its function is as follows. Involved in the biosynthesis of branched-chain amino acids (BCAA). Catalyzes an alkyl-migration followed by a ketol-acid reduction of (S)-2-acetolactate (S2AL) to yield (R)-2,3-dihydroxy-isovalerate. In the isomerase reaction, S2AL is rearranged via a Mg-dependent methyl migration to produce 3-hydroxy-3-methyl-2-ketobutyrate (HMKB). In the reductase reaction, this 2-ketoacid undergoes a metal-dependent reduction by NADPH to yield (R)-2,3-dihydroxy-isovalerate. The sequence is that of Ketol-acid reductoisomerase (NADP(+)) from Methanocella arvoryzae (strain DSM 22066 / NBRC 105507 / MRE50).